A 419-amino-acid polypeptide reads, in one-letter code: ATP-dependent RNA helicase RhlB (419 aa).

The Q motif motif lies at 9–37 (QRFSDLALHRIVQQAIKEKGFEFCTPIQA). The Helicase ATP-binding domain maps to 40 to 217 (LPITLKGQDI…FEHMNDPQYV (178 aa)). 53 to 60 (AQTGTGKT) lines the ATP pocket. The DEAD box signature appears at 163–166 (DEAD). The region spanning 241–388 (KMALLMTLLE…VSQYDAKALI (148 aa)) is the Helicase C-terminal domain.

This sequence belongs to the DEAD box helicase family. RhlB subfamily. In terms of assembly, component of the RNA degradosome, which is a multiprotein complex involved in RNA processing and mRNA degradation.

Its subcellular location is the cytoplasm. It carries out the reaction ATP + H2O = ADP + phosphate + H(+). In terms of biological role, DEAD-box RNA helicase involved in RNA degradation. Has RNA-dependent ATPase activity and unwinds double-stranded RNA. The protein is ATP-dependent RNA helicase RhlB of Histophilus somni (strain 2336) (Haemophilus somnus).